Reading from the N-terminus, the 159-residue chain is Small ribosomal subunit protein uS7 (159 aa).

This sequence belongs to the universal ribosomal protein uS7 family. Part of the 30S ribosomal subunit. Contacts proteins S9 and S11.

Its function is as follows. One of the primary rRNA binding proteins, it binds directly to 16S rRNA where it nucleates assembly of the head domain of the 30S subunit. Is located at the subunit interface close to the decoding center, probably blocks exit of the E-site tRNA. This chain is Small ribosomal subunit protein uS7, found in Wolbachia sp. subsp. Brugia malayi (strain TRS).